The sequence spans 116 residues: Carbohydrate-binding protein AQN-3 (116 aa).

Cys9 and Cys30 are oxidised to a cystine. Positions Cys9–Ile110 constitute a CUB domain. Asn50 carries N-linked (GlcNAc...) asparagine glycosylation. The cysteines at positions 53 and 74 are disulfide-linked. His85 carries the post-translational modification Methylhistidine.

It belongs to the spermadhesin family. Post-translationally, the residue at position 85 was identified as a methylhistidine by mass spectrometry.

Its subcellular location is the secreted. Functionally, AQN proteins mediate the binding of boar spermatozoa to component(s) of the egg's zona pellucida by a carbohydrate-binding mechanism. AQN proteins are secretory components of the male accessory glands being coated to the sperm surface at the time of ejaculation. They possess as well heparin-, serine-protease-inhibitor-binding capability. The chain is Carbohydrate-binding protein AQN-3 from Sus scrofa (Pig).